Consider the following 285-residue polypeptide: Energy-coupling factor transporter ATP-binding protein EcfA3 (285 aa).

One can recognise an ABC transporter domain in the interval 6-242 (LKVEELNYNY…KEVIRKVNLR (237 aa)). ATP is bound at residue 39-46 (GGNGVGKS).

It belongs to the ABC transporter superfamily. Energy-coupling factor EcfA family. Forms a stable energy-coupling factor (ECF) transporter complex composed of 2 membrane-embedded substrate-binding proteins (S component), 2 ATP-binding proteins (A component) and 2 transmembrane proteins (T component).

The protein localises to the cell membrane. In terms of biological role, ATP-binding (A) component of a common energy-coupling factor (ECF) ABC-transporter complex. Unlike classic ABC transporters this ECF transporter provides the energy necessary to transport a number of different substrates. This Clostridium perfringens (strain ATCC 13124 / DSM 756 / JCM 1290 / NCIMB 6125 / NCTC 8237 / Type A) protein is Energy-coupling factor transporter ATP-binding protein EcfA3.